The sequence spans 319 residues: Multivesicular body subunit 12B (319 aa).

The tract at residues 1–50 (MRSCFCVRRSRDPPPPQPPPPPPQRGTDQSTMPEVKDLSEALPETSMDPI) is disordered. Pro residues predominate over residues 13 to 24 (PPPPQPPPPPPQ). 2 positions are modified to phosphoserine: Ser46 and Ser101. Residues 47 to 193 (MDPITGVGVV…SMGIWYRMGR (147 aa)) enclose the MABP domain. 3 positions are modified to phosphothreonine: Thr122, Thr204, and Thr205. A disordered region spans residues 195-222 (PRNHDSSQPTTPSQSSAASTPAPNLPRH). The span at 200–216 (SSQPTTPSQSSAASTPA) shows a compositional bias: low complexity. Ser224 is modified (phosphoserine). Residues 254-303 (MDGVPFMISEKFSCVPESMQPFDLLGITIKSLAEIEKEYEYSFRTEQSAA) enclose the UMA domain. Positions 299–319 (EQSAAARLPPSPTRCQQIPQS) are disordered. A Phosphoserine modification is found at Ser309.

This sequence belongs to the MVB12 family. As to quaternary structure, component of the ESCRT-I complex (endosomal sorting complex required for transport I) which consists of TSG101, VPS28, a VPS37 protein (VPS37A to -D) and MVB12A or MVB12B in a 1:1:1:1 stoichiometry. Interacts with TSG101; the association appears to be mediated by the TSG101-VPS37 binary subcomplex. Interacts with VPS28. Interacts with VPS37B; the association appears to be mediated by the TSG101-VPS37 binary subcomplex. Interacts with VPS37C; the association appears to be mediated by the TSG101-VPS37 binary subcomplex.

It localises to the endosome. It is found in the late endosome membrane. Component of the ESCRT-I complex, a regulator of vesicular trafficking process. Required for the sorting of endocytic ubiquitinated cargos into multivesicular bodies. In Homo sapiens (Human), this protein is Multivesicular body subunit 12B (MVB12B).